The chain runs to 248 residues: 1-(5-phosphoribosyl)-5-[(5-phosphoribosylamino)methylideneamino] imidazole-4-carboxamide isomerase (248 aa).

Asp8 functions as the Proton acceptor in the catalytic mechanism. Asp131 (proton donor) is an active-site residue.

Belongs to the HisA/HisF family.

The protein localises to the cytoplasm. The catalysed reaction is 1-(5-phospho-beta-D-ribosyl)-5-[(5-phospho-beta-D-ribosylamino)methylideneamino]imidazole-4-carboxamide = 5-[(5-phospho-1-deoxy-D-ribulos-1-ylimino)methylamino]-1-(5-phospho-beta-D-ribosyl)imidazole-4-carboxamide. It functions in the pathway amino-acid biosynthesis; L-histidine biosynthesis; L-histidine from 5-phospho-alpha-D-ribose 1-diphosphate: step 4/9. The protein is 1-(5-phosphoribosyl)-5-[(5-phosphoribosylamino)methylideneamino] imidazole-4-carboxamide isomerase of Cupriavidus necator (strain ATCC 17699 / DSM 428 / KCTC 22496 / NCIMB 10442 / H16 / Stanier 337) (Ralstonia eutropha).